The primary structure comprises 138 residues: Large ribosomal subunit protein eL32 (138 aa).

Belongs to the eukaryotic ribosomal protein eL32 family.

This is Large ribosomal subunit protein eL32 (rpl32e) from Saccharolobus solfataricus (strain ATCC 35092 / DSM 1617 / JCM 11322 / P2) (Sulfolobus solfataricus).